A 106-amino-acid polypeptide reads, in one-letter code: EspC protein homolog (106 aa).

Belongs to the EspC family.

The chain is EspC protein homolog from Mycobacterium leprae (strain TN).